The primary structure comprises 243 residues: MNRPPLPLAAHDRLIFALDVPGHDEAIAWVDRLGESVAFYKIGMELLASGEYFHVLDALAKRNKRVFVDLKFFDIPATVAGTIRRLSQWPVSYCTVHGWHAGMLEAAAAANQGDMRLLAVTVLTSMGRPDLAAMGIDREPVDVVVERALAAQAAGIDGVIASGQEAGMIRRATGPAFSIVCPGIRPGGPVGDDQQRTVGVAQAFADGADAIVVGRPIRLANDPAAAAAAIQAEIRAAVVQHRD.

Substrate contacts are provided by residues aspartate 19, lysine 41, 69 to 78, threonine 124, arginine 185, glutamine 194, glycine 214, and arginine 215; that span reads DLKFFDIPAT. The active-site Proton donor is the lysine 71.

It belongs to the OMP decarboxylase family. Type 1 subfamily. In terms of assembly, homodimer.

It carries out the reaction orotidine 5'-phosphate + H(+) = UMP + CO2. It participates in pyrimidine metabolism; UMP biosynthesis via de novo pathway; UMP from orotate: step 2/2. In terms of biological role, catalyzes the decarboxylation of orotidine 5'-monophosphate (OMP) to uridine 5'-monophosphate (UMP). This chain is Orotidine 5'-phosphate decarboxylase, found in Xanthomonas campestris pv. campestris (strain 8004).